The sequence spans 100 residues: Defensin-6 (100 aa).

The signal sequence occupies residues 1 to 19 (MRTLTILTAVLLVALQAKA). Positions 20–68 (EPLQAEDDPLQAKAYEADAQEQRGANDQDFAVSFAEDASSSLRALGSTR) are excised as a propeptide. 3 disulfides stabilise this stretch: cysteine 72–cysteine 99, cysteine 74–cysteine 88, and cysteine 78–cysteine 98.

Belongs to the alpha-defensin family. Homodimer. Self-assembles into higher-order oligomers termed nanonets, fibril-like structures that entrap microbes. Self-assembly into nanonets seems to protect against proteolytic digestion in duodenal fluid. Interacts with Y.enterocolitica invasin and S.typhimurium fliC/flagellin; the interaction creates an anchoring site for progressive DEFA6 self-assembly into nanonets. In terms of processing, proteolytically cleaved by trypsin at Arg-68; the propeptide is stored in the tissue of the small intestine and the mature peptide is found in the luminal fluid; cleavage may occur during or after release into the lumen. The N-terminal propeptide region suppresses self-assembly and renders DEFA6 propeptide unable to agglutinate bacteria and protect human epithelial cells from bacterial invasion. Under reducing conditions, naturally present in the gut owing to the low redox potential or enzymatically generated by the thioredoxin system, the disulfide bridges are opened leading to a conformational change of DEF6, thereby changing its antimicrobial spectrum. The reduced form exhibits inhibitory activity against anaerobic bacteria, in contrast to the minimal antimicrobial activity of the disulfide-linked oxidized form. The formation of higher-order nanonets and bacterial entrapment is independent of the redox state. Expressed in Paneth cells of the small intestine (at protein level).

The protein localises to the secreted. The protein resides in the cytoplasmic vesicle. Its subcellular location is the secretory vesicle. In terms of biological role, host-defense peptide that contributes to intestinal innate immunity and mediates homeostasis at mucosal surfaces by forming higher-order oligomers that capture bacteria and prevent microbial invasion of the epithelium. After binding to bacterial surface proteins, undergoes ordered self-assembly to form fibril-like nanonets that surround and entangle bacteria and thereby prevent bacterial invasion across the epithelial barrier. Entangles and agglutinates Gram-negative bacteria, such as E.coli, S.typhimurium and Y.enterocolitica, and Gram-positive bacteria such as L.monocytogenes, thereby protecting the intestine against invasion by enteric bacterial pathogens. Blocks adhesion of C.albicans to intestinal epithelial cells and thereby suppresses fungal invasion of epithelial cells and biofilm formation. Under reducing conditions and in an acidic environment similar to the intestinal milieu, exhibits inhibitory activity against anaerobic bacteria such as B.adolescentis, L.acidophilus and B.breve, as well as B.longum and S.thermophilus, possibly by leading to alterations in bacterial cell envelope structures. The disulfide-linked oxidized form exhibits negligible antimicrobial activity against Gram-negative and Gram-positive bacteria, as compared to the enteric defensin DEFA5. The chain is Defensin-6 (DEFA6) from Homo sapiens (Human).